Reading from the N-terminus, the 492-residue chain is MIPVVALVGRPNVGKSTLFNRLTRTRDALVADFPGLTRDRKYGRAEVEGREFICIDTGGIDGTEEGVETRMAEQSLLAIEEADVVLFMVDARAGLMPADIAIAKHLRSREKPTFLVANKTDGIDVDQAMADFWSLGLGDIYPIAASHGRGVTSLLEQALLPWVDEVNPQEEVDEDAEYWAKFEAEQNGEAEEEPEDDFNPQDLPIKLAIVGRPNVGKSTLTNRILGEDRVVVYDMPGTTRDSIYIPMQRDEREYVLIDTAGVRKRGKITDVVEKFSVIKTLQAIEDANVVLLVIDAREGISDQDLSLLGFILNSGRSLVIVVNKWDGLSQEVKEQVKETLDYRLGFIDFARVHFISALHGSGVGNLFESVREAYDSATRRVSTAMLTRIMNMAAEDHQPPLVRGRRVKLKYAHAGGYNPPIVVIHGNQVKDLPDSYKRYLMNYFRKSLDVMGTPIRIQFKEGENPFANKRNTLTPNQMRKRKRLIKHIKKSK.

EngA-type G domains are found at residues 3 to 166 (PVVA…VDEV) and 205 to 378 (IKLA…DSAT). Residues 9–16 (GRPNVGKS), 56–60 (DTGGI), 118–121 (NKTD), 211–218 (GRPNVGKS), 258–262 (DTAGV), and 323–326 (NKWD) contribute to the GTP site. The 85-residue stretch at 379 to 463 (RRVSTAMLTR…PIRIQFKEGE (85 aa)) folds into the KH-like domain.

It belongs to the TRAFAC class TrmE-Era-EngA-EngB-Septin-like GTPase superfamily. EngA (Der) GTPase family. Associates with the 50S ribosomal subunit.

In terms of biological role, GTPase that plays an essential role in the late steps of ribosome biogenesis. The chain is GTPase Der from Klebsiella pneumoniae subsp. pneumoniae (strain ATCC 700721 / MGH 78578).